The sequence spans 279 residues: HTH-type transcriptional activator RhaS (279 aa).

Residues 175 to 273 enclose the HTH araC/xylS-type domain; that stretch reads QALLGWLQNN…SQAPKSLRHQ (99 aa). 2 consecutive DNA-binding regions (H-T-H motif) follow at residues 192–213 and 240–263; these read GSLA…KQHT and ITTI…RKAF.

In terms of assembly, binds DNA as a dimer.

It localises to the cytoplasm. Its function is as follows. Activates expression of the rhaBAD and rhaT operons. The protein is HTH-type transcriptional activator RhaS of Pectobacterium carotovorum subsp. carotovorum (strain PC1).